The following is a 28-amino-acid chain: Basic phospholipase A2 homolog BmatTX-II (28 aa).

In terms of assembly, monomer. Expressed by the venom gland.

It is found in the secreted. Snake venom phospholipase A2 homolog that lacks enzymatic activity. Shows high myotoxic activity, neutrophil activation (demonstrated by activation induction of IL-1beta production), and slight cytotoxicity against Jurkat (leukemia T) and SK-BR-3 (breast adenocarcinoma) tumor cell lines. A model of myotoxic mechanism has been proposed: an apo Lys49-PLA2 is activated by the entrance of a hydrophobic molecule (e.g. fatty acid) at the hydrophobic channel of the protein leading to a reorientation of a monomer. This reorientation causes a transition between 'inactive' to 'active' states, causing alignment of C-terminal and membrane-docking sites (MDoS) side-by-side and putting the membrane-disruption sites (MDiS) in the same plane, exposed to solvent and in a symmetric position for both monomers. The MDoS region stabilizes the toxin on membrane by the interaction of charged residues with phospholipid head groups. Subsequently, the MDiS region destabilizes the membrane with penetration of hydrophobic residues. This insertion causes a disorganization of the membrane, allowing an uncontrolled influx of ions (i.e. calcium and sodium), and eventually triggering irreversible intracellular alterations and cell death. The polypeptide is Basic phospholipase A2 homolog BmatTX-II (Bothrops mattogrossensis (Pitviper)).